The sequence spans 486 residues: RAC-beta serine/threonine-protein kinase A (486 aa).

One can recognise a PH domain in the interval 5–110 (MVIKEGWLQK…WIIAIQTVAN (106 aa)). O-linked (GlcNAc) serine glycans are attached at residues Ser-133 and Ser-136. The Protein kinase domain maps to 157 to 414 (FDYLKLLGKG…AQEVMSHRFF (258 aa)). Residues 163 to 171 (LGKGTFGKV) and Lys-186 contribute to the ATP site. The Proton acceptor role is filled by Asp-280. Residue Thr-311 is glycosylated (O-linked (GlcNAc) threonine). Thr-314 carries the post-translational modification Phosphothreonine. Thr-318 carries O-linked (GlcNAc) threonine glycosylation. Positions 415 to 486 (VSINWQDVTE…QFSYSASIRE (72 aa)) constitute an AGC-kinase C-terminal domain. The interval 455–486 (LTPPDRYDNLDALESDQRPHFPQFSYSASIRE) is disordered. Over residues 459–473 (DRYDNLDALESDQRP) the composition is skewed to basic and acidic residues. Phosphoserine is present on Ser-479. The O-linked (GlcNAc) serine; alternate glycan is linked to Ser-479.

The protein belongs to the protein kinase superfamily. AGC Ser/Thr protein kinase family. RAC subfamily. Phosphorylation on Thr-314 and Ser-479 is required for full activity. Phosphorylation of the activation loop at Thr-314 by PDPK1/PDK1 is a prerequisite for full activation. Phosphorylation by mTORC2 at Ser-479 in response to growth factors plays a key role in AKT1 activation by facilitating subsequent phosphorylation of the activation loop by PDPK1/PDK1.

It catalyses the reaction L-seryl-[protein] + ATP = O-phospho-L-seryl-[protein] + ADP + H(+). The enzyme catalyses L-threonyl-[protein] + ATP = O-phospho-L-threonyl-[protein] + ADP + H(+). Its activity is regulated as follows. Two specific sites, one in the kinase domain (Thr-314) and the other in the C-terminal regulatory region (Ser-479), need to be phosphorylated for its full activation. Its function is as follows. Akt2-a is one of several closely related serine/threonine-protein kinases known as the AKT kinase, and which regulate many processes including metabolism, proliferation, cell survival, growth and angiogenesis. This is mediated through serine and/or threonine phosphorylation of a range of downstream substrates. Over 100 substrate candidates have been reported so far, but for most of them, no isoform specificity has been reported. May be involved in the inhibition of ciliogenesis. The chain is RAC-beta serine/threonine-protein kinase A (akt2-a) from Xenopus laevis (African clawed frog).